The chain runs to 394 residues: Elongation factor Tu (394 aa).

The 195-residue stretch at 10-204 (KPHVNVGTIG…AVDSYIPQPE (195 aa)) folds into the tr-type G domain. The interval 19 to 26 (GHVDHGKT) is G1. 19–26 (GHVDHGKT) lines the GTP pocket. Threonine 26 serves as a coordination point for Mg(2+). The interval 60 to 64 (GITIS) is G2. Positions 81–84 (DCPG) are G3. Residues 81–85 (DCPGH) and 136–139 (NKCD) contribute to the GTP site. The G4 stretch occupies residues 136 to 139 (NKCD). A G5 region spans residues 174 to 176 (SAV).

It belongs to the TRAFAC class translation factor GTPase superfamily. Classic translation factor GTPase family. EF-Tu/EF-1A subfamily. As to quaternary structure, monomer.

It localises to the cytoplasm. It carries out the reaction GTP + H2O = GDP + phosphate + H(+). Its function is as follows. GTP hydrolase that promotes the GTP-dependent binding of aminoacyl-tRNA to the A-site of ribosomes during protein biosynthesis. The polypeptide is Elongation factor Tu (Akkermansia muciniphila (strain ATCC BAA-835 / DSM 22959 / JCM 33894 / BCRC 81048 / CCUG 64013 / CIP 107961 / Muc)).